A 390-amino-acid chain; its full sequence is Ankyrin repeat domain-containing protein 63 (390 aa).

5 ANK repeats span residues 11-40 (AGTR…RSII), 46-79 (QGRT…AVNL), 83-112 (RGRT…DPEA), 116-145 (AGNS…RLGL), and 153-182 (AGLT…RAAA). Disordered regions lie at residues 181-213 (AAAA…SPRR) and 226-245 (AGGH…ELAS). S193 is subject to Phosphoserine. At S304 the chain carries Phosphoserine. The segment at 320 to 377 (VGLSPHPEGCPGSGRLGLRRRSTAPDIPSLVGEASGPESGPELENNALPFSVPGPKPW) is disordered.

This is Ankyrin repeat domain-containing protein 63 from Mus musculus (Mouse).